The primary structure comprises 2200 residues: Bromodomain and WD repeat-containing DDB_G0285837 (2200 aa).

3 disordered regions span residues 137-178 (GFND…SNTN), 194-245 (VTPT…TTPP), and 259-288 (DIQQQQQQQQQQQQQTISKSKNEDINNNNN). 3 stretches are compositionally biased toward low complexity: residues 161–176 (NNNNNNSSSSSSSNSN), 203–242 (NTTNTTTTTTATTTTTTTTTTTNNTNVQTTPTNTTNTTLT), and 259–273 (DIQQQQQQQQQQQQQ). WD repeat units follow at residues 352-391 (GHKAPTYCLQFDKSGRLYFTGSDDHLVKVWSTYSGRLIAT), 394-433 (GHLGDITDMCTSFDNSLLATASNDNVIRIWNLNSNQYDSI), 442-483 (SVNN…HVIS), 548-586 (GKTNEITGTTMNKGGTLIVASVDSSLKIWSTLFNPPKLV), 591-630 (GHPTTILALQYSHGSDAIVSGSYDGTVIIWRHSGGPKWDH), 653-691 (RSKATFKNVIWSHDDRFIITTDYNMIRVWNSLDGSFHLE), 694-736 (EHTS…KKFV), and 741-780 (GFQCQILDGCFSPDGQKFIVTNSTGKWFMFELGLGSDINN). 2 stretches are compositionally biased toward acidic residues: residues 918 to 933 (DDEIIFPSDPSDEDFN) and 955 to 968 (QDDDDDDDDDEDYD). Disordered regions lie at residues 918 to 1180 (DDEI…NHLT), 1262 to 1297 (NNNNNNNNNNNNNNNNNNNNNNNGVDDQQINSDDDD), 1461 to 1538 (ENNQ…NNNN), and 1662 to 1703 (NFNS…NNNN). The segment covering 974–1000 (MSTRKKSKIKADKRKKRLLKQSKKFTR) has biased composition (basic residues). Over residues 1052-1074 (GEIEMDDDDQYLNDNILDSDDND) the composition is skewed to acidic residues. A compositionally biased stretch (low complexity) spans 1109-1132 (SSDNSSENDSSANGSDSDYSGSKS). The span at 1133-1164 (NKNKRGDKSKRNKKGKKNVKNKKVQKRGRKKS) shows a compositional bias: basic residues. Low complexity-rich tracts occupy residues 1262–1292 (NNNNNNNNNNNNNNNNNNNNNNNGVDDQQIN) and 1461–1525 (ENNQ…NSLN). In terms of domain architecture, Bromo spans 1722-1823 (EKIENLKKEM…HRISDILKEA (102 aa)). The segment at 1850–2200 (DKDDSQLDDE…RGRGRPPKSN (351 aa)) is disordered. Positions 1878–1888 (LANNNHGNNKS) are enriched in low complexity. Residues 1910 to 1920 (TGKNITRSLLS) are compositionally biased toward polar residues. Over residues 1945–1958 (TTTTTTTTTTTSST) the composition is skewed to low complexity. Composition is skewed to acidic residues over residues 2016–2028 (DYNDDDDDDDNDG), 2057–2073 (EDEDEDDNNQEEDEEDY), and 2104–2113 (SEEEEDEDQS). Positions 2114 to 2124 (DVNSNNNSDNE) are enriched in low complexity. Positions 2125–2138 (SGGEDGYSGEDGSE) are enriched in acidic residues. The span at 2170-2185 (SFKNNNNNNNINNNVN) shows a compositional bias: low complexity. A compositionally biased stretch (basic residues) spans 2190 to 2200 (KRGRGRPPKSN).

The polypeptide is Bromodomain and WD repeat-containing DDB_G0285837 (Dictyostelium discoideum (Social amoeba)).